Reading from the N-terminus, the 2185-residue chain is Genome polyprotein (2185 aa).

Gly-2 carries the N-myristoyl glycine; by host lipid modification. Topologically, residues Gly-2 to Gln-1495 are cytoplasmic. Residues Phe-566–Val-582 are amphipathic alpha-helix. Catalysis depends on for protease 2A activity residues His-872 and Asp-890. Positions 907 and 909 each coordinate Zn(2+). Cys-961 functions as the For protease 2A activity in the catalytic mechanism. Zn(2+)-binding residues include Cys-967 and His-969. The membrane-binding stretch occupies residues Asn-1101–Gln-1173. Positions Asn-1101–Thr-1239 are oligomerization. Positions Ala-1122–Gln-1126 are RNA-binding. Positions Glu-1205–Asn-1361 constitute an SF3 helicase domain. Residues Cys-1369, Cys-1381, and Cys-1386 each contribute to the Zn(2+) site. Residues Cys-1369–Cys-1386 form a C4-type; degenerate zinc finger. The segment at Glu-1413–Val-1420 is RNA-binding. An oligomerization region spans residues Leu-1424–Gln-1429. The stretch at Ala-1496–Tyr-1511 is an intramembrane region. Residues Lys-1512 to Phe-2185 are Cytoplasmic-facing. Position 1521 is an O-(5'-phospho-RNA)-tyrosine (Tyr-1521). The Peptidase C3 domain maps to Gly-1541 to Phe-1719. Active-site for protease 3C activity residues include His-1580, Glu-1611, and Cys-1687. One can recognise a RdRp catalytic domain in the interval Gly-1950–Leu-2066. Residues Asp-1956 and Asp-2052 each contribute to the Mg(2+) site.

It belongs to the picornaviruses polyprotein family. As to quaternary structure, interacts with capsid protein VP1 and capsid protein VP3 to form heterotrimeric protomers. In terms of assembly, interacts with capsid protein VP0, and capsid protein VP3 to form heterotrimeric protomers. Five protomers subsequently associate to form pentamers which serve as building blocks for the capsid. Interacts with capsid protein VP2, capsid protein VP3 and capsid protein VP4 following cleavage of capsid protein VP0. Interacts with capsid protein VP1 and capsid protein VP3 in the mature capsid. As to quaternary structure, interacts with capsid protein VP0 and capsid protein VP1 to form heterotrimeric protomers. Five protomers subsequently associate to form pentamers which serve as building blocks for the capsid. Interacts with capsid protein VP4 in the mature capsid. Interacts with protein 2C; this interaction may be important for virion morphogenesis. In terms of assembly, interacts with capsid protein VP1 and capsid protein VP3. Homodimer. As to quaternary structure, homohexamer; forms a hexameric ring structure with 6-fold symmetry characteristic of AAA+ ATPases. Interacts (via N-terminus) with host RTN3 (via reticulon domain); this interaction is important for viral replication. Interacts with capsid protein VP3; this interaction may be important for virion morphogenesis. In terms of assembly, interacts with protein 3CD. Homodimer. Interacts with host GBF1. Interacts (via GOLD domain) with host ACBD3 (via GOLD domain); this interaction allows the formation of a viral protein 3A/ACBD3 heterotetramer with a 2:2 stoichiometry, which will stimulate the recruitment of host PI4KB in order to synthesize PI4P at the viral RNA replication sites. As to quaternary structure, interacts with RNA-directed RNA polymerase. In terms of assembly, interacts with protein 3AB and with RNA-directed RNA polymerase. Interacts with Viral protein genome-linked and with protein 3CD. Mg(2+) serves as cofactor. In terms of processing, specific enzymatic cleavages in vivo by the viral proteases yield processing intermediates and the mature proteins. Post-translationally, myristoylation is required for the formation of pentamers during virus assembly. Further assembly of 12 pentamers and a molecule of genomic RNA generates the provirion. During virion maturation, immature virions are rendered infectious following cleavage of VP0 into VP4 and VP2. This maturation seems to be an autocatalytic event triggered by the presence of RNA in the capsid and it is followed by a conformational change infectious virion. In terms of processing, myristoylation is required during RNA encapsidation and formation of the mature virus particle. Post-translationally, VPg is uridylylated by the polymerase into VPg-pUpU. This acts as a nucleotide-peptide primer for the genomic RNA replication.

The protein resides in the virion. The protein localises to the host cytoplasm. Its subcellular location is the host cytoplasmic vesicle membrane. It is found in the host nucleus. It carries out the reaction a ribonucleoside 5'-triphosphate + H2O = a ribonucleoside 5'-diphosphate + phosphate + H(+). It catalyses the reaction Selective cleavage of Tyr-|-Gly bond in the picornavirus polyprotein.. The enzyme catalyses RNA(n) + a ribonucleoside 5'-triphosphate = RNA(n+1) + diphosphate. The catalysed reaction is Selective cleavage of Gln-|-Gly bond in the poliovirus polyprotein. In other picornavirus reactions Glu may be substituted for Gln, and Ser or Thr for Gly.. With respect to regulation, replication or transcription is subject to high level of random mutations by the nucleotide analog ribavirin. Forms an icosahedral capsid of pseudo T=3 symmetry with capsid proteins VP2 and VP3. The capsid is 300 Angstroms in diameter, composed of 60 copies of each capsid protein and enclosing the viral positive strand RNA genome. Capsid protein VP1 mainly forms the vertices of the capsid. Capsid protein VP1 interacts with host cell receptor to provide virion attachment to target host cells. This attachment induces virion internalization. Tyrosine kinases are probably involved in the entry process. After binding to its receptor, the capsid undergoes conformational changes. Capsid protein VP1 N-terminus (that contains an amphipathic alpha-helix) and capsid protein VP4 are externalized. Together, they shape a pore in the host membrane through which viral genome is translocated to host cell cytoplasm. In terms of biological role, forms an icosahedral capsid of pseudo T=3 symmetry with capsid proteins VP2 and VP3. The capsid is 300 Angstroms in diameter, composed of 60 copies of each capsid protein and enclosing the viral positive strand RNA genome. Its function is as follows. Lies on the inner surface of the capsid shell. After binding to the host receptor, the capsid undergoes conformational changes. Capsid protein VP4 is released, Capsid protein VP1 N-terminus is externalized, and together, they shape a pore in the host membrane through which the viral genome is translocated into the host cell cytoplasm. Functionally, component of immature procapsids, which is cleaved into capsid proteins VP4 and VP2 after maturation. Allows the capsid to remain inactive before the maturation step. Cysteine protease that cleaves viral polyprotein and specific host proteins. It is responsible for the autocatalytic cleavage between the P1 and P2 regions, which is the first cleavage occurring in the polyprotein. Also cleaves the host translation initiation factor EIF4G1, in order to shut down the capped cellular mRNA translation. Inhibits the host nucleus-cytoplasm protein and RNA trafficking by cleaving host members of the nuclear pores. Counteracts stress granule formation probably by antagonizing its assembly or promoting its dissassembly. Cleaves and inhibits host IFIH1/MDA5, thereby inhibiting the type-I IFN production and the establishment of the antiviral state. Cleaves and inhibits host MAVS, thereby inhibiting the type-I IFN production and the establishment of the antiviral state. In terms of biological role, plays an essential role in the virus replication cycle by acting as a viroporin. Creates a pore in the host endoplasmic reticulum and as a consequence releases Ca2+ in the cytoplasm of infected cell. In turn, high levels of cytoplasmic calcium may trigger membrane trafficking and transport of viral ER-associated proteins to viroplasms, sites of viral genome replication. Its function is as follows. Induces and associates with structural rearrangements of intracellular membranes. Displays RNA-binding, nucleotide binding and NTPase activities. May play a role in virion morphogenesis and viral RNA encapsidation by interacting with the capsid protein VP3. Functionally, localizes the viral replication complex to the surface of membranous vesicles. Together with protein 3CD binds the Cis-Active RNA Element (CRE) which is involved in RNA synthesis initiation. Acts as a cofactor to stimulate the activity of 3D polymerase, maybe through a nucleid acid chaperone activity. Localizes the viral replication complex to the surface of membranous vesicles. It inhibits host cell endoplasmic reticulum-to-Golgi apparatus transport and causes the disassembly of the Golgi complex, possibly through GBF1 interaction. This would result in depletion of MHC, trail receptors and IFN receptors at the host cell surface. Plays an essential role in viral RNA replication by recruiting ACBD3 and PI4KB at the viral replication sites, thereby allowing the formation of the rearranged membranous structures where viral replication takes place. In terms of biological role, acts as a primer for viral RNA replication and remains covalently bound to viral genomic RNA. VPg is uridylylated prior to priming replication into VPg-pUpU. The oriI viral genomic sequence may act as a template for this. The VPg-pUpU is then used as primer on the genomic RNA poly(A) by the RNA-dependent RNA polymerase to replicate the viral genome. During genome replication, the VPg-RNA linkage is removed by the host TDP2, thereby accelerating replication. During the late stage of the replication cycle, host TDP2 is excluded from sites of viral RNA synthesis and encapsidation, allowing for the generation of progeny virions. Its function is as follows. Involved in the viral replication complex and viral polypeptide maturation. It exhibits protease activity with a specificity and catalytic efficiency that is different from protease 3C. Protein 3CD lacks polymerase activity. Protein 3CD binds to the 5'UTR of the viral genome. Functionally, replicates the viral genomic RNA on the surface of intracellular membranes. May form linear arrays of subunits that propagate along a strong head-to-tail interaction called interface-I. Covalently attaches UMP to a tyrosine of VPg, which is used to prime RNA synthesis. The positive stranded RNA genome is first replicated at virus induced membranous vesicles, creating a dsRNA genomic replication form. This dsRNA is then used as template to synthesize positive stranded RNA genomes. ss(+)RNA genomes are either translated, replicated or encapsidated. Major viral protease that mediates proteolytic processing of the polyprotein. Cleaves host EIF5B, contributing to host translation shutoff. Also cleaves host PABPC1, contributing to host translation shutoff. Cleaves host NLRP1, triggers host N-glycine-mediated degradation of the autoinhibitory NLRP1 N-terminal fragment. The protein is Genome polyprotein of Homo sapiens (Human).